We begin with the raw amino-acid sequence, 125 residues long: Small ribosomal subunit protein mS41 (125 aa).

Residues 1–10 (MLSIFGCVRA) constitute a mitochondrion transit peptide. A disordered region spans residues 103–125 (SFFGGERNRKATVAKWRAEQRNK).

It belongs to the mitochondrion-specific ribosomal protein mS41 family.

It localises to the mitochondrion. Functionally, involved in telomere length regulation. The polypeptide is Small ribosomal subunit protein mS41 (FYV4) (Candida glabrata (strain ATCC 2001 / BCRC 20586 / JCM 3761 / NBRC 0622 / NRRL Y-65 / CBS 138) (Yeast)).